A 269-amino-acid polypeptide reads, in one-letter code: Putative pyruvate, phosphate dikinase regulatory protein (269 aa).

Residue 147–154 (GVSRTSKT) coordinates ADP.

This sequence belongs to the pyruvate, phosphate/water dikinase regulatory protein family. PDRP subfamily.

The enzyme catalyses N(tele)-phospho-L-histidyl/L-threonyl-[pyruvate, phosphate dikinase] + ADP = N(tele)-phospho-L-histidyl/O-phospho-L-threonyl-[pyruvate, phosphate dikinase] + AMP + H(+). The catalysed reaction is N(tele)-phospho-L-histidyl/O-phospho-L-threonyl-[pyruvate, phosphate dikinase] + phosphate + H(+) = N(tele)-phospho-L-histidyl/L-threonyl-[pyruvate, phosphate dikinase] + diphosphate. In terms of biological role, bifunctional serine/threonine kinase and phosphorylase involved in the regulation of the pyruvate, phosphate dikinase (PPDK) by catalyzing its phosphorylation/dephosphorylation. The protein is Putative pyruvate, phosphate dikinase regulatory protein of Geotalea daltonii (strain DSM 22248 / JCM 15807 / FRC-32) (Geobacter daltonii).